We begin with the raw amino-acid sequence, 301 residues long: MKLFALLVSITLCYSFPAPLQTNVSEPFGLLQKVSEQVIDPDYNIPEVKDAPAIPYDERNSPTHAYSVDISFHTTPSDMDCLRDQGYKSVFVRALNPIGNTYFDRNALNTINNAFEAGLGSEVYITPNINSTRSGADQISLVYQNLLANGINVRSIWIQVTSPTNWVAPMAVRIEFIQDMIRSAKNLGLSVGIYTSFYDWLEITGGWNTFSSDVFLWYWHVLSMGTDGETTPTLEDFRPFGPWRQATVKQFGQVEKLCGMIVNRNVYSTGNQHLSQIVHFSTHQENSSSEKKLIRVGGIGF.

Residues 1 to 15 (MKLFALLVSITLCYS) form the signal peptide. A Ch-type lysozyme domain is found at 64–282 (HAYSVDISFH…HLSQIVHFST (219 aa)).

This sequence belongs to the glycosyl hydrolase 25 family.

Its function is as follows. Plays a role in the stress response to heavy metals such as copper, probably in a kgb-1-dependent manner. The polypeptide is Lysozyme-like protein 3 (Caenorhabditis elegans).